A 607-amino-acid polypeptide reads, in one-letter code: Guanine nucleotide-binding protein-like 1 (607 aa).

Over residues 1-14 (MPRKKPFSVKQKKK) the composition is skewed to basic residues. Residues 1-81 (MPRKKPFSVK…GPRGYDPNRY (81 aa)) are disordered. The span at 15–26 (QLQDKRERKRGL) shows a compositional bias: basic and acidic residues. Serine 32, serine 33, and serine 34 each carry phosphoserine. A phosphothreonine mark is found at threonine 48 and threonine 50. Phosphoserine occurs at positions 51 and 68. The CP-type G domain maps to 178–418 (WRQLWRVLEM…LCDCPGLIFP (241 aa)). 225–228 (NKVD) lines the GTP pocket. Serine 324 is subject to Phosphoserine. GTP-binding positions include 367–374 (GFPNVGKS) and 411–415 (DCPGL). A disordered region spans residues 544–607 (GRVGPAGDEE…PYALLGEGEC (64 aa)). Acidic residues predominate over residues 550-585 (GDEEEEEEEELSSSCEEEGEEDRDADEEGEGDEDTP). A phosphoserine mark is found at serine 561, serine 562, and serine 563.

Belongs to the TRAFAC class YlqF/YawG GTPase family.

Its function is as follows. Possible regulatory or functional link with the histocompatibility cluster. The protein is Guanine nucleotide-binding protein-like 1 (Gnl1) of Rattus norvegicus (Rat).